A 299-amino-acid chain; its full sequence is 4-hydroxy-tetrahydrodipicolinate synthase 2 (299 aa).

A pyruvate-binding site is contributed by Thr-54. The Proton donor/acceptor role is filled by Tyr-142. The active-site Schiff-base intermediate with substrate is the Lys-170. Val-210 serves as a coordination point for pyruvate.

Belongs to the DapA family. As to quaternary structure, homotetramer; dimer of dimers.

The protein resides in the cytoplasm. It carries out the reaction L-aspartate 4-semialdehyde + pyruvate = (2S,4S)-4-hydroxy-2,3,4,5-tetrahydrodipicolinate + H2O + H(+). It functions in the pathway amino-acid biosynthesis; L-lysine biosynthesis via DAP pathway; (S)-tetrahydrodipicolinate from L-aspartate: step 3/4. Its function is as follows. Catalyzes the condensation of (S)-aspartate-beta-semialdehyde [(S)-ASA] and pyruvate to 4-hydroxy-tetrahydrodipicolinate (HTPA). This chain is 4-hydroxy-tetrahydrodipicolinate synthase 2, found in Streptomyces coelicolor (strain ATCC BAA-471 / A3(2) / M145).